Here is a 391-residue protein sequence, read N- to C-terminus: ASPTSPKVFPLSLDSTPQDGNVVVACLVQGFFPQEPLSVTWSESGQNVTARNFPPSQDASGDLYTTSSQLTLPATQCPDGKSVTCHVKHYTNSSQDVTVPCRVPPPPPCCHPRLSLHRPALEDLLLGSEANLTCTLTGLRDASGATFTWTPSSGKSAVQGPPERDLCGCYSVSSVLPGCAQPWNHGETFTCTAAHPELKTPLTANITKSGNTFRPEVHLLPPPSEELALNELVTLTCLARGFSPKDVLVRWLQGSQELPREKYLTWASRQEPSQGTTTYAVTSILRVAAEDWKKGETFSCMVGHEALPLAFTQKTIDRMAGSCCVADWQMPPPYVVLDLPQETLEEETPGANLWPTTITFLTLFLLSLFYSTALTVTSVRGPSGKREGPQY.

At 1–357 (ASPTSPKVFP…TPGANLWPTT (357 aa)) the chain is on the extracellular side. 3 Ig-like domains span residues 6–98 (PKVF…QDVT), 112–207 (PRLS…ANIT), and 215–317 (PEVH…KTID). Residues Cys-26 and Cys-85 are joined by a disulfide bond. Residue Asn-47 is glycosylated (N-linked (GlcNAc...) asparagine). Asn-92 carries an N-linked (GlcNAc...) (complex) asparagine glycan. Cystine bridges form between Cys-110/Cys-167 and Cys-134/Cys-191. Asn-131 carries N-linked (GlcNAc...) asparagine glycosylation. A glycan (N-linked (GlcNAc...) (complex) asparagine) is linked at Asn-205. Cysteines 237 and 300 form a disulfide. Asp-327 is a glycosylation site (N-linked (GlcNAc...) (complex) asparagine). Residues 358–379 (ITFLTLFLLSLFYSTALTVTSV) form a helical membrane-spanning segment. Residues 380–391 (RGPSGKREGPQY) are Cytoplasmic-facing.

In terms of assembly, immunoglobulins are composed of two identical heavy chains and two identical light chains; disulfide-linked. Monomeric or polymeric. Part of the secretory IgA (sIgA) complex that consists of two, four or five IgA monomers, and two additional non-Ig polypeptides, namely the JCHAIN and the secretory component (the proteolytic product of PIGR).

Its subcellular location is the secreted. It localises to the cell membrane. Functionally, constant region of immunoglobulin heavy chains. Immunoglobulins, also known as antibodies, are membrane-bound or secreted glycoproteins produced by B lymphocytes. In the recognition phase of humoral immunity, the membrane-bound immunoglobulins serve as receptors which, upon binding of a specific antigen, trigger the clonal expansion and differentiation of B lymphocytes into immunoglobulins-secreting plasma cells. Secreted immunoglobulins mediate the effector phase of humoral immunity, which results in the elimination of bound antigens. The antigen binding site is formed by the variable domain of one heavy chain, together with that of its associated light chain. Thus, each immunoglobulin has two antigen binding sites with remarkable affinity for a particular antigen. The variable domains are assembled by a process called V-(D)-J rearrangement and can then be subjected to somatic hypermutations which, after exposure to antigen and selection, allow affinity maturation for a particular antigen. Ig alpha is the major immunoglobulin class in body secretions. This is Immunoglobulin heavy constant alpha 2 from Homo sapiens (Human).